The primary structure comprises 372 residues: Tetraacyldisaccharide 4'-kinase (372 aa).

ATP is bound at residue 65–72; it reads TVGGTGKT. A disordered region spans residues 351-372; that stretch reads QSTATGMADGLDKEHQDGQPAA. A compositionally biased stretch (basic and acidic residues) spans 360 to 372; it reads GLDKEHQDGQPAA.

The protein belongs to the LpxK family.

It catalyses the reaction a lipid A disaccharide + ATP = a lipid IVA + ADP + H(+). It participates in glycolipid biosynthesis; lipid IV(A) biosynthesis; lipid IV(A) from (3R)-3-hydroxytetradecanoyl-[acyl-carrier-protein] and UDP-N-acetyl-alpha-D-glucosamine: step 6/6. In terms of biological role, transfers the gamma-phosphate of ATP to the 4'-position of a tetraacyldisaccharide 1-phosphate intermediate (termed DS-1-P) to form tetraacyldisaccharide 1,4'-bis-phosphate (lipid IVA). The chain is Tetraacyldisaccharide 4'-kinase from Cupriavidus metallidurans (strain ATCC 43123 / DSM 2839 / NBRC 102507 / CH34) (Ralstonia metallidurans).